Reading from the N-terminus, the 497-residue chain is G protein-coupled receptor gprM (497 aa).

Asparagine 3 is a glycosylation site (N-linked (GlcNAc...) asparagine). Transmembrane regions (helical) follow at residues 66-86 (ISVAILPLCIFLLVSYAVLPV), 98-118 (FTLGICFMEASKIAFIIPLGV), 138-158 (CAFTGSLLLLGGWMVVVWSFL), 179-199 (WGALIFGWVVPAVGLTVMLIL), and 221-241 (YWIPIISFAVAALILQLATMA). Asparagine 259 carries an N-linked (GlcNAc...) asparagine glycan. Helical transmembrane passes span 293–313 (VTLVLIIIANVIFFSVTFIEL) and 357–377 (LLLAVLVLLSLVGFWNFILFA). N-linked (GlcNAc...) asparagine glycosylation occurs at asparagine 421. A disordered region spans residues 428 to 497 (YKSPSPMVRS…APAVYREYDD (70 aa)).

Belongs to the G-protein coupled receptor GPR1/git3 family. As to quaternary structure, interacts with gpaA.

The protein resides in the cell membrane. Its function is as follows. G protein-coupled receptor that plays a role in conidiation and regulation of the biosynthesis of secondary metabolites such as dihydroxynaphthalene (DHN)-melanin, via interaction with the G-protein complex alpha subunit gpaA. This is G protein-coupled receptor gprM from Aspergillus fumigatus (strain CBS 144.89 / FGSC A1163 / CEA10) (Neosartorya fumigata).